Consider the following 483-residue polypeptide: Glutamyl-tRNA(Gln) amidotransferase subunit A (483 aa).

Residues Lys75 and Ser150 each act as charge relay system in the active site. The Acyl-ester intermediate role is filled by Ser174.

Belongs to the amidase family. GatA subfamily. As to quaternary structure, heterotrimer of A, B and C subunits.

The catalysed reaction is L-glutamyl-tRNA(Gln) + L-glutamine + ATP + H2O = L-glutaminyl-tRNA(Gln) + L-glutamate + ADP + phosphate + H(+). Allows the formation of correctly charged Gln-tRNA(Gln) through the transamidation of misacylated Glu-tRNA(Gln) in organisms which lack glutaminyl-tRNA synthetase. The reaction takes place in the presence of glutamine and ATP through an activated gamma-phospho-Glu-tRNA(Gln). The polypeptide is Glutamyl-tRNA(Gln) amidotransferase subunit A (Legionella pneumophila (strain Corby)).